Here is a 366-residue protein sequence, read N- to C-terminus: tRNA/tmRNA (uracil-C(5))-methyltransferase (366 aa).

Residues Q190, Y218, N223, E239, and D299 each contribute to the S-adenosyl-L-methionine site. The active-site Nucleophile is the C324. E358 serves as the catalytic Proton acceptor.

Belongs to the class I-like SAM-binding methyltransferase superfamily. RNA M5U methyltransferase family. TrmA subfamily.

It carries out the reaction uridine(54) in tRNA + S-adenosyl-L-methionine = 5-methyluridine(54) in tRNA + S-adenosyl-L-homocysteine + H(+). It catalyses the reaction uridine(341) in tmRNA + S-adenosyl-L-methionine = 5-methyluridine(341) in tmRNA + S-adenosyl-L-homocysteine + H(+). Functionally, dual-specificity methyltransferase that catalyzes the formation of 5-methyluridine at position 54 (m5U54) in all tRNAs, and that of position 341 (m5U341) in tmRNA (transfer-mRNA). This is tRNA/tmRNA (uracil-C(5))-methyltransferase from Escherichia coli O127:H6 (strain E2348/69 / EPEC).